Consider the following 496-residue polypeptide: UDP-glycosyltransferase 73C3 (496 aa).

UDP-alpha-D-glucose contacts are provided by residues Ser297, 357–359 (APQ), 374–382 (HCGWNSTLE), and 396–399 (FGDQ).

The protein belongs to the UDP-glycosyltransferase family.

The polypeptide is UDP-glycosyltransferase 73C3 (UGT73C3) (Arabidopsis thaliana (Mouse-ear cress)).